Consider the following 300-residue polypeptide: MTDTNATRCGYVAIVGRPNVGKSTLLNHILGQKLAITSRKPQTTRHNMLGIKTEGDVQAIYVDTPGMHKGGEKALNRYMNKTASAALKDVDVVIFVVDRTKWTEEDQMVLERVQYVTGPLIVALNKTDRIEDKAELMPHLSWLQEQLPNAQIIPISAQQGHNLDALEKVIADHLPENDHFFPEDQITDRSSRFLAAELVREKIMRQLGAELPYQITVEIEEFKQQGATLHIHALILVERDGQKKIIIGDKGERIKRIGTEARKDMELLFDSKIMLNLWVKVKGGWSDDERALRSLGYGDL.

An Era-type G domain is found at 8–176; it reads RCGYVAIVGR…EKVIADHLPE (169 aa). The tract at residues 16 to 23 is G1; sequence GRPNVGKS. 16–23 is a GTP binding site; it reads GRPNVGKS. Residues 42-46 are G2; sequence QTTRH. The G3 stretch occupies residues 63 to 66; it reads DTPG. GTP contacts are provided by residues 63 to 67 and 125 to 128; these read DTPGM and NKTD. The G4 stretch occupies residues 125-128; the sequence is NKTD. Residues 155–157 form a G5 region; that stretch reads ISA. Residues 199 to 283 enclose the KH type-2 domain; it reads VREKIMRQLG…MLNLWVKVKG (85 aa).

The protein belongs to the TRAFAC class TrmE-Era-EngA-EngB-Septin-like GTPase superfamily. Era GTPase family. Monomer.

The protein localises to the cytoplasm. Its subcellular location is the cell inner membrane. Functionally, an essential GTPase that binds both GDP and GTP, with rapid nucleotide exchange. Plays a role in 16S rRNA processing and 30S ribosomal subunit biogenesis and possibly also in cell cycle regulation and energy metabolism. The sequence is that of GTPase Era from Pseudomonas fluorescens (strain Pf0-1).